The following is a 471-amino-acid chain: GDP-mannose transporter (471 aa).

Positions 1–13 (MSSGSRSFFTPQE) are enriched in polar residues. The interval 1–52 (MSSGSRSFFTPQETRLELPQGAAHQTPDITRPASPSENDRAPFLNGGPSDAR) is disordered. Over 1–70 (MSSGSRSFFT…ALRNDSEKPA (70 aa)) the chain is Cytoplasmic. The helical transmembrane segment at 71–91 (VGIMALAPILCYCAASITMTV) threads the bilayer. At 92–101 (VNKFTVSGRG) the chain is on the lumenal side. Residues 102-122 (FNMNLLVLLIQSTVGVTCVWI) traverse the membrane as a helical segment. Over 123 to 139 (AERAGLIQLRGLNAKDA) the chain is Cytoplasmic. Residues 140-160 (WNWMPLSIMLVFVIWTGSKAL) traverse the membrane as a helical segment. Over 161 to 166 (QYLNIS) the chain is Lumenal. N-linked (GlcNAc...) asparagine glycosylation occurs at Asn164. A helical membrane pass occupies residues 167–187 (VYTIFKNLTIILIAYGEVMWF). Residues 188–193 (GGRVTR) lie on the Cytoplasmic side of the membrane. A helical transmembrane segment spans residues 194-214 (IVLCSFLFMVLSSVIAAWSDI). Topologically, residues 215-279 (SNVFAIGNLS…DVIEGFQGYG (65 aa)) are lumenal. An N-linked (GlcNAc...) asparagine glycan is attached at Asn222. Residues 280-300 (LLSSGYVWMALNCICSATYVL) form a helical membrane-spanning segment. At 301–315 (LMRKRIKVTGFKDWD) the chain is on the cytoplasmic side. The helical transmembrane segment at 316 to 336 (TMFYNNFLSIPVLLLMSFLVE) threads the bilayer. Over 337–354 (DWSYANLHKNFPDDKQTK) the chain is Lumenal. Residues 355-375 (LISAIVFSGACAILISYTTAW) traverse the membrane as a helical segment. Topologically, residues 376 to 383 (CIRATSST) are cytoplasmic. A helical transmembrane segment spans residues 384–404 (TYSMVGALNKLPVALSGMVFF). Over 405–408 (HDPP) the chain is Lumenal. The chain crosses the membrane as a helical span at residues 409 to 429 (VTFSSVSAIAVGFFAGLVYAF). The Cytoplasmic segment spans residues 430-471 (GKNKQAEAAKLGGHASANGSSSMSGSKDGSSLPMHTFNDRKD). Residues 442–460 (GHASANGSSSMSGSKDGSS) show a composition bias toward low complexity. The tract at residues 442–471 (GHASANGSSSMSGSKDGSSLPMHTFNDRKD) is disordered.

The protein belongs to the TPT transporter family. SLC35D subfamily. Homooligomer.

Its subcellular location is the golgi apparatus membrane. It is found in the cytoplasmic vesicle membrane. The protein localises to the endoplasmic reticulum membrane. In terms of biological role, involved in the import of GDP-mannose from the cytoplasm into the Golgi lumen. In Mycosarcoma maydis (Corn smut fungus), this protein is GDP-mannose transporter (VRG4).